The chain runs to 308 residues: GTP cyclohydrolase MptA (308 aa).

Residues 282 to 308 form a disordered region; that stretch reads NDESIHQHNAHAEREVTLGQLRDELDA.

It belongs to the GTP cyclohydrolase IV family. In terms of assembly, homodimer. It depends on Fe(2+) as a cofactor.

The catalysed reaction is GTP + H2O = 7,8-dihydroneopterin 2',3'-cyclic phosphate + formate + diphosphate + H(+). The protein operates within cofactor biosynthesis; 5,6,7,8-tetrahydromethanopterin biosynthesis. Converts GTP to 7,8-dihydro-D-neopterin 2',3'-cyclic phosphate, the first intermediate in the biosynthesis of coenzyme methanopterin. Involved in archaeosine (G(+)) and folate biosynthesis. This is GTP cyclohydrolase MptA from Haloferax volcanii (strain ATCC 29605 / DSM 3757 / JCM 8879 / NBRC 14742 / NCIMB 2012 / VKM B-1768 / DS2) (Halobacterium volcanii).